Consider the following 1597-residue polypeptide: Transmembrane protein 131-like (1597 aa).

An N-terminal signal peptide occupies residues 1 to 40 (MAGLRRPQSGAYRRTAAAVNLLLGVFQVLLSCCRPGGAQG). Topologically, residues 41–869 (QAFEPLPNVV…VVPGPSWEES (829 aa)) are extracellular. N-linked (GlcNAc...) asparagine glycans are attached at residues N343, N593, N709, and N846. The required for Wnt-signaling inhibition and LRP6 degradation stretch occupies residues 696–916 (DYGKVTSLIL…QNGSSSSQQN (221 aa)). A helical transmembrane segment spans residues 870–890 (FWRLTVFFVSLSLLGVILIAF). The Cytoplasmic segment spans residues 891 to 1597 (QQAQYILMEF…SRDSSYCGNM (707 aa)). Residues 907–917 (QNGSSSSQQNG) are compositionally biased toward low complexity. Disordered stretches follow at residues 907–928 (QNGSSSSQQNGDPVAMISSHPH), 1096–1240 (AELK…EQRL), and 1252–1322 (DGAG…SDCD). A compositionally biased stretch (basic residues) spans 1213-1222 (RPCRRNKKRA). Residues 1223–1239 (SAQASSSPRPSEQSEQR) show a composition bias toward low complexity. Positions 1269-1290 (PERREEDSYYQKSEKKCADKFC) are enriched in basic and acidic residues. Over residues 1291-1319 (SDSSSDCGSSSGSVRASRGSWGSWSSSSS) the composition is skewed to low complexity.

The protein belongs to the TMEM131 family.

It localises to the cell membrane. It is found in the endoplasmic reticulum. The protein localises to the cytoplasm. Its function is as follows. In its membrane-associated form, antagonizes canonical Wnt signaling by triggering lysosome-dependent degradation of Wnt-activated LRP6. Regulates thymocyte proliferation. This is Transmembrane protein 131-like from Mus musculus (Mouse).